We begin with the raw amino-acid sequence, 136 residues long: Large ribosomal subunit protein uL16 (136 aa).

The protein belongs to the universal ribosomal protein uL16 family. Part of the 50S ribosomal subunit.

Its function is as follows. Binds 23S rRNA and is also seen to make contacts with the A and possibly P site tRNAs. The sequence is that of Large ribosomal subunit protein uL16 from Rickettsia massiliae (strain Mtu5).